The sequence spans 130 residues: DNA-directed RNA polymerase subunit omega (130 aa).

Positions 107 to 130 are disordered; sequence SLDVSQESHDDEIDDQDSGEEVPI. Positions 115–130 are enriched in acidic residues; that stretch reads HDDEIDDQDSGEEVPI.

It belongs to the RNA polymerase subunit omega family. In terms of assembly, the RNAP catalytic core consists of 2 alpha, 1 beta, 1 beta' and 1 omega subunit. When a sigma factor is associated with the core the holoenzyme is formed, which can initiate transcription.

It carries out the reaction RNA(n) + a ribonucleoside 5'-triphosphate = RNA(n+1) + diphosphate. Functionally, promotes RNA polymerase assembly. Latches the N- and C-terminal regions of the beta' subunit thereby facilitating its interaction with the beta and alpha subunits. This is DNA-directed RNA polymerase subunit omega from Wolbachia pipientis subsp. Culex pipiens (strain wPip).